Reading from the N-terminus, the 732-residue chain is Probable boron transporter 3 (732 aa).

Position 1 is an N-acetylmethionine (M1). The Cytoplasmic segment spans residues 1–37; that stretch reads MDEAESFVPFQGIKKDVKGRLNCYKQDWISGLRAGFR. A helical membrane pass occupies residues 38-58; sequence ILAPTTYIFFASAIPVITFGE. Residues 59-77 are Extracellular-facing; the sequence is QLERDTDGKITAVQTLVST. Residues 78–98 form a helical membrane-spanning segment; that stretch reads ALCGVIHSIIGGQPLLILGVA. Over 99-123 the chain is Cytoplasmic; that stretch reads EPTVIMYTFMFNFAKSRTDLGSNLF. A helical transmembrane segment spans residues 124-144; that stretch reads LAWTGWVCLWTGLLLFLLAVL. Over 145-157 the chain is Extracellular; the sequence is GACTFINRFTRLA. A helical membrane pass occupies residues 158–178; the sequence is GELFGILIAMLFMQEAIRGIV. Residues 179-197 lie on the Cytoplasmic side of the membrane; that stretch reads DEFGVPGRTNPRSAEFQPA. A helical membrane pass occupies residues 198–218; that stretch reads WVFANGMFGLVLSSGLLYTGL. At 219–234 the chain is on the extracellular side; sequence KSRKARSWRFGAEWLR. Residues 235-255 form a helical membrane-spanning segment; that stretch reads GFIADYGVPVMVVVWTCISYI. Topologically, residues 256-291 are cytoplasmic; that stretch reads PWKSVPQGIPRRLVSPNPWSPGAYQNWTVIKEMVDV. Residues 292–312 form a helical membrane-spanning segment; sequence PVLYILLAVVPASMIAVLYYF. Residues 313 to 339 lie on the Extracellular side of the membrane; the sequence is DHSVASQLAQQEDFNLRKPPAYHYDLF. The helical transmembrane segment at 340–360 threads the bilayer; the sequence is LLGFLTILCGLIGIPPSNGVI. Residues 361–463 lie on the Cytoplasmic side of the membrane; that stretch reads PQSPMHTKSL…ILPVEVKEQR (103 aa). A helical membrane pass occupies residues 464–484; the sequence is VSNFLQAMMVAGCVAAMPLIK. Over 485–556 the chain is Extracellular; that stretch reads RIPSSVLWGY…LFQTAYLLVC (72 aa). A helical transmembrane segment spans residues 557-577; that stretch reads FGITWVPVAGVLFPLMIMFLV. Topologically, residues 578-732 are cytoplasmic; that stretch reads PVRQYVLPNF…QRLSNLGKSV (155 aa). The disordered stretch occupies residues 695–732; that stretch reads GGGEISPRSSAGRAPFSPRSATGGGGGEQRLSNLGKSV.

Belongs to the anion exchanger (TC 2.A.31.3) family.

Its subcellular location is the membrane. In terms of biological role, probable boron transporter. Boron is essential for maintaining the integrity of plants cell walls. The polypeptide is Probable boron transporter 3 (BOR3) (Arabidopsis thaliana (Mouse-ear cress)).